The sequence spans 100 residues: Small ribosomal subunit protein uS14c (100 aa).

It belongs to the universal ribosomal protein uS14 family. As to quaternary structure, part of the 30S ribosomal subunit.

Its subcellular location is the plastid. It localises to the chloroplast. Its function is as follows. Binds 16S rRNA, required for the assembly of 30S particles. This chain is Small ribosomal subunit protein uS14c, found in Tetradesmus obliquus (Green alga).